We begin with the raw amino-acid sequence, 329 residues long: DNA-directed RNA polymerase subunit alpha (329 aa).

Residues 1–234 are alpha N-terminal domain (alpha-NTD); the sequence is MQSAVNEFLT…QQLAVFVDLE (234 aa). The tract at residues 248 to 329 is alpha C-terminal domain (alpha-CTD); sequence IDPVLLRPVD…WPPASLKNND (82 aa).

The protein belongs to the RNA polymerase alpha chain family. In terms of assembly, homodimer. The RNAP catalytic core consists of 2 alpha, 1 beta, 1 beta' and 1 omega subunit. When a sigma factor is associated with the core the holoenzyme is formed, which can initiate transcription.

It catalyses the reaction RNA(n) + a ribonucleoside 5'-triphosphate = RNA(n+1) + diphosphate. Functionally, DNA-dependent RNA polymerase catalyzes the transcription of DNA into RNA using the four ribonucleoside triphosphates as substrates. This chain is DNA-directed RNA polymerase subunit alpha, found in Saccharophagus degradans (strain 2-40 / ATCC 43961 / DSM 17024).